We begin with the raw amino-acid sequence, 1333 residues long: DNA-directed RNA polymerase subunit beta' (1333 aa).

4 residues coordinate Zn(2+): C60, C62, C75, and C78. 3 residues coordinate Mg(2+): D535, D537, and D539. The Zn(2+) site is built by C901, C983, C990, and C993.

This sequence belongs to the RNA polymerase beta' chain family. As to quaternary structure, the RNAP catalytic core consists of 2 alpha, 1 beta, 1 beta' and 1 omega subunit. When a sigma factor is associated with the core the holoenzyme is formed, which can initiate transcription. The cofactor is Mg(2+). It depends on Zn(2+) as a cofactor.

It catalyses the reaction RNA(n) + a ribonucleoside 5'-triphosphate = RNA(n+1) + diphosphate. Its function is as follows. DNA-dependent RNA polymerase catalyzes the transcription of DNA into RNA using the four ribonucleoside triphosphates as substrates. This chain is DNA-directed RNA polymerase subunit beta', found in Corynebacterium glutamicum (strain ATCC 13032 / DSM 20300 / JCM 1318 / BCRC 11384 / CCUG 27702 / LMG 3730 / NBRC 12168 / NCIMB 10025 / NRRL B-2784 / 534).